Consider the following 620-residue polypeptide: Two-component response regulator ORR27 (620 aa).

The Response regulatory domain maps to 24-138; it reads HVLVVDDDAA…AIKFIWKHVL (115 aa). At aspartate 76 the chain carries 4-aspartylphosphate. 2 disordered regions span residues 171-197 and 215-257; these read PPAVQLPAAPAQAGNRDGEAHEEAELS and VWSS…LEAT. The segment at residues 261–321 is a DNA-binding region (myb-like GARP); the sequence is KKVRTRFTWT…HLQKYRSWLE (61 aa). Residues 431-456 show a composition bias toward polar residues; the sequence is SVSRDAHENGNSQARGSAMSNGTSGT. Disordered stretches follow at residues 431–457, 501–523, and 596–620; these read SVSRDAHENGNSQARGSAMSNGTSGTR, SDQNPGTSHPTSSSAINNQNSKT, and PPRGLNNEIASHENTNGKNGASSGP. Residues 603–620 show a composition bias toward polar residues; sequence EIASHENTNGKNGASSGP.

Belongs to the ARR family. Type-B subfamily. Post-translationally, two-component system major event consists of a His-to-Asp phosphorelay between a sensor histidine kinase (HK) and a response regulator (RR). In plants, the His-to-Asp phosphorelay involves an additional intermediate named Histidine-containing phosphotransfer protein (HPt). This multistep phosphorelay consists of a His-Asp-His-Asp sequential transfer of a phosphate group between first a His and an Asp of the HK protein, followed by the transfer to a conserved His of the HPt protein and finally the transfer to an Asp in the receiver domain of the RR protein.

It localises to the nucleus. Functionally, transcriptional activator that binds specific DNA sequence. Functions as a response regulator involved in His-to-Asp phosphorelay signal transduction system. Phosphorylation of the Asp residue in the receiver domain activates the ability of the protein to promote the transcription of target genes. May directly activate some type-A response regulators in response to cytokinins. The protein is Two-component response regulator ORR27 of Oryza sativa subsp. japonica (Rice).